The chain runs to 91 residues: MKIRAIVTIKGLVQGVAFRHHTVQQAQRLGVSGWVKNLAGGDVQGCFEGEEEAVDALVAWCHHGPSRARVDRVILEREHYRGEFDDFDVRY.

The region spanning 4–91 is the Acylphosphatase-like domain; the sequence is RAIVTIKGLV…GEFDDFDVRY (88 aa). Residues Arg19 and Asn37 contribute to the active site.

This sequence belongs to the acylphosphatase family.

The catalysed reaction is an acyl phosphate + H2O = a carboxylate + phosphate + H(+). This is Acylphosphatase (acyP) from Geobacter sulfurreducens (strain ATCC 51573 / DSM 12127 / PCA).